The following is a 136-amino-acid chain: Piercer of microtubule wall 1 protein (136 aa).

A disordered region spans residues 1–24 (MAEECPRACAEPVAPKATAPPERT).

The protein belongs to the PIERCE1 family. Microtubule inner protein component of sperm flagellar doublet microtubules. Interacts with CFAP53, ODAD1 and ODAD3; the interactions link the outer dynein arms docking complex (ODA-DC) to the internal microtubule inner proteins (MIP) in cilium axoneme. Expressed in airway epithelial cells.

It is found in the cytoplasm. Its subcellular location is the cytoskeleton. The protein resides in the cilium axoneme. It localises to the flagellum axoneme. Its function is as follows. Microtubule inner protein involved in the attachment of outer dynein arms (ODAs) to dynein-decorated doublet microtubules (DMTs) in cilia axoneme, which is required for motile cilia beating. Functions at the initial step of left-right asymmetry specification of the visceral organs. In Homo sapiens (Human), this protein is Piercer of microtubule wall 1 protein.